Consider the following 421-residue polypeptide: Protein FAM110C (421 aa).

Disordered stretches follow at residues 1–36 (MRAL…NKSA), 51–80 (TLGS…PSAL), and 141–266 (TTRV…PASM). 3 stretches are compositionally biased toward basic and acidic residues: residues 143–155 (RVAD…KETE), 185–202 (PAEK…KETE), and 232–249 (PAEK…KETE). S350 is subject to Phosphoserine.

Belongs to the FAM110 family. As to quaternary structure, interacts with AKT1; the interaction is transient and follows AKT1 activation. Interacts with PPP2CA and alpha-tubulin.

Its subcellular location is the cytoplasm. It is found in the cytoskeleton. It localises to the microtubule organizing center. The protein localises to the centrosome. The protein resides in the spindle pole. Its subcellular location is the nucleus. Functionally, may play a role in microtubule organization. May play a role in cell spreading and cell migration of epithelial cells; the function may involve the AKT1 signaling pathway. The sequence is that of Protein FAM110C (Fam110c) from Mus musculus (Mouse).